Here is an 857-residue protein sequence, read N- to C-terminus: Putative disease resistance protein At1g50180 (857 aa).

The stretch at 27 to 60 forms a coiled coil; that stretch reads IGDQVKQLQDELKRLNCFLKDADEKQHESERVRN. In terms of domain architecture, NB-ARC spans 148–461; sequence SLREQRQSFP…AEGMVMPVKH (314 aa). ATP is bound at residue 192-199; the sequence is GMGGLGKT. 4 LRR repeats span residues 653–678, 680–703, 754–780, and 791–816; these read MTSL…SLSK, LKRL…DVTQ, LPNL…NLEN, and MMRL…RFLK.

This sequence belongs to the disease resistance NB-LRR family.

Functionally, potential disease resistance protein. The chain is Putative disease resistance protein At1g50180 from Arabidopsis thaliana (Mouse-ear cress).